The primary structure comprises 200 residues: Recombination protein RecR (200 aa).

The C4-type zinc-finger motif lies at 58–73 (CSVCGNLTDTDPCFIC). One can recognise a Toprim domain in the interval 81–176 (DLLCVVERPR…SVTRIAHGLP (96 aa)).

This sequence belongs to the RecR family.

Its function is as follows. May play a role in DNA repair. It seems to be involved in an RecBC-independent recombinational process of DNA repair. It may act with RecF and RecO. The polypeptide is Recombination protein RecR (Pelotomaculum thermopropionicum (strain DSM 13744 / JCM 10971 / SI)).